Here is a 56-residue protein sequence, read N- to C-terminus: Large ribosomal subunit protein bL33 (56 aa).

The protein belongs to the bacterial ribosomal protein bL33 family.

This is Large ribosomal subunit protein bL33 from Helicobacter hepaticus (strain ATCC 51449 / 3B1).